A 995-amino-acid polypeptide reads, in one-letter code: tRNA wybutosine-synthesizing protein 2/3/4 (995 aa).

Positions Met1–Gly212 are tRNA wybutosine-synthesizing protein 3 homolog. 5 Kelch repeats span residues Glu284 to Asp335, Phe336 to Thr386, Lys387 to Ser436, Gln437 to His486, and Ile488 to Gly535. The tRNA wybutosine-synthesizing protein 2 homolog stretch occupies residues Glu661–Arg995. Residues Lys828 and Asp896–Asn897 contribute to the S-adenosyl-L-methionine site.

The protein in the C-terminal section; belongs to the class I-like SAM-binding methyltransferase superfamily. TRM5/TYW2 family. This sequence in the N-terminal section; belongs to the TYW3 family.

It carries out the reaction 4-demethyl-7-[(3S)-3-amino-3-carboxypropyl]wyosine(37) in tRNA(Phe) + S-adenosyl-L-methionine = 7-[(3S)-3-amino-3-carboxypropyl]wyosine(37) in tRNA(Phe) + S-adenosyl-L-homocysteine + H(+). The enzyme catalyses 4-demethylwyosine(37) in tRNA(Phe) + S-adenosyl-L-methionine = 4-demethyl-7-[(3S)-3-amino-3-carboxypropyl]wyosine(37) in tRNA(Phe) + S-methyl-5'-thioadenosine + H(+). Its pathway is tRNA modification; wybutosine-tRNA(Phe) biosynthesis. In terms of biological role, S-adenosyl-L-methionine-dependent transferase that acts as a component of the wybutosine biosynthesis pathway. Wybutosine is a hyper modified guanosine with a tricyclic base found at the 3'-position adjacent to the anticodon of eukaryotic phenylalanine tRNA. This chain is tRNA wybutosine-synthesizing protein 2/3/4, found in Arabidopsis thaliana (Mouse-ear cress).